Reading from the N-terminus, the 413-residue chain is Ribulose bisphosphate carboxylase/oxygenase activase, chloroplastic (413 aa).

The N-terminal 54 residues, 1 to 54 (MAATVSTIGAVNRTTLNNSNYGGLVPNSAFLGSRLKVSSRFTTSKMVTGNFKIV), are a transit peptide targeting the chloroplast. 162–169 (GGKGQGKS) is a binding site for ATP.

The protein belongs to the RuBisCO activase family.

Its subcellular location is the plastid. It localises to the chloroplast stroma. Activation of RuBisCO (ribulose-1,5-bisphosphate carboxylase/oxygenase; EC 4.1.1.39) involves the ATP-dependent carboxylation of the epsilon-amino group of lysine leading to a carbamate structure. This Cucumis sativus (Cucumber) protein is Ribulose bisphosphate carboxylase/oxygenase activase, chloroplastic.